Reading from the N-terminus, the 240-residue chain is Protein unc-119 homolog A (240 aa).

Over residues 1-12 (MKVKKGGGGTGP) the composition is skewed to gly residues. The segment at 1-62 (MKVKKGGGGT…PLQGKQPIGP (62 aa)) is disordered. 3 positions are modified to phosphoserine; by CK2: S37, S39, and S41. Y131 lines the tetradecanoate pocket.

Belongs to the PDE6D/unc-119 family. In terms of assembly, interacts with CABP4; in the absence of calcium. May interact with GTP-bound ARL1. Interacts with ARL2 and ARL3 (GTP-bound forms); this promotes the release of myristoylated cargo proteins. Found in a complex with ARL3, RP2 and UNC119; RP2 induces hydrolysis of GTP ARL3 in the complex, leading to the release of UNC119. Interacts with NPHP3 (when myristoylated). Interacts with CYS1 (when myristoylated). Interacts with MACIR; interaction only takes place when UNC119 is not liganded with myristoylated proteins. Interacts with ARL1 and ARL3 GTP-bound forms. Interacts with ARL2. Interacts with ARL2. Interacts with LCK; this interaction plays a crucial role in activation of LCK. Interacts with FYN. Interacts with RAB11A; in a cell cycle-dependent manner. Interacts with LYN (via SH2 and SH3 domains); leading to LYN activation. Interacts with DNM1; leading to a decrease of DNM1 GTPase activity. Found in a complex with ABL1, ABL2, CRK and UNC119; leading to the inhibition of CRK phosphorylation by ABL kinases. Interacts with CD44. Interacts with KLHL18 (via kelch repeats). Interacts with PPP3CA, PPP3CB and PPP3CC. Interacts with USP48; this interaction promotes UNC119 stability. In terms of processing, phosphorylation suppresses its interaction with KLHL18 and down-regulates its KLHL18-mediated degradation. Phosphorylated more under light conditions than dark conditions. Dephosphorylated by calcineurin.

The protein localises to the cytoplasm. The protein resides in the cytoskeleton. It localises to the microtubule organizing center. Its subcellular location is the centrosome. It is found in the spindle. The protein localises to the spindle pole. In terms of biological role, involved in synaptic functions in photoreceptor cells, the signal transduction in immune cells as a Src family kinase activator, endosome recycling, the uptake of bacteria and endocytosis, protein trafficking in sensory neurons and as lipid-binding chaperone with specificity for a diverse subset of myristoylated proteins. Specifically binds the myristoyl moiety of a subset of N-terminally myristoylated proteins and is required for their localization. Binds myristoylated GNAT1 and is required for G-protein localization and trafficking in sensory neurons. Probably plays a role in trafficking proteins in photoreceptor cells. Plays important roles in mediating Src family kinase signals for the completion of cytokinesis via RAB11A. This chain is Protein unc-119 homolog A (Unc119), found in Rattus norvegicus (Rat).